The following is a 358-amino-acid chain: Probable translocation protein Y4yK (358 aa).

The protein belongs to the FliN/MopA/SpaO family.

Its function is as follows. Could be involved in the secretion of an unknown factor. This is Probable translocation protein Y4yK from Sinorhizobium fredii (strain NBRC 101917 / NGR234).